Consider the following 430-residue polypeptide: Tektin-2 (430 aa).

Coiled coils occupy residues 82–160 and 273–379; these read LTDL…QAFE and EKVY…DIAC.

It belongs to the tektin family. As to quaternary structure, microtubule inner protein component of sperm flagellar doublet microtubules. May interact with CCDC172. Post-translationally, tyrosine phosphorylated. In terms of processing, ubiquitinated, leading to its degradation. Deubiquitinated by USP16, promoting its stability.

The protein localises to the cytoplasm. It localises to the cytoskeleton. The protein resides in the cilium axoneme. Its subcellular location is the flagellum axoneme. It is found in the microtubule organizing center. Functionally, microtubule inner protein (MIP) part of the dynein-decorated doublet microtubules (DMTs) in cilia and flagellar axoneme. Plays a key role in the assembly or attachment of the inner dynein arm to microtubules in sperm flagella and tracheal cilia. Forms filamentous polymers in the walls of ciliary and flagellar microtubules. This chain is Tektin-2 (TEKT2), found in Macaca fascicularis (Crab-eating macaque).